Here is a 315-residue protein sequence, read N- to C-terminus: tRNA uridine(34) hydroxylase (315 aa).

Residues 145–235 (MKNDFILVDM…GIIEYVNFIK (91 aa)) enclose the Rhodanese domain. Residue cysteine 199 is the Cysteine persulfide intermediate of the active site.

Belongs to the TrhO family.

The catalysed reaction is uridine(34) in tRNA + AH2 + O2 = 5-hydroxyuridine(34) in tRNA + A + H2O. In terms of biological role, catalyzes oxygen-dependent 5-hydroxyuridine (ho5U) modification at position 34 in tRNAs. This Wigglesworthia glossinidia brevipalpis protein is tRNA uridine(34) hydroxylase.